Here is a 616-residue protein sequence, read N- to C-terminus: Zinc metalloproteinase nas-36 (616 aa).

The first 21 residues, 1-21, serve as a signal peptide directing secretion; it reads MRRFCRLLFLNSLLSISICKA. The propeptide occupies 22 to 125; sequence QNPAHLVADE…SKDKTKRLRR (104 aa). Residues 126-321 form the Peptidase M12A domain; the sequence is SFVSDKTATW…VATINTAYCK (196 aa). Intrachain disulfides connect cysteine 168–cysteine 320, cysteine 191–cysteine 210, cysteine 324–cysteine 345, cysteine 347–cysteine 356, cysteine 367–cysteine 396, cysteine 424–cysteine 444, cysteine 518–cysteine 549, cysteine 522–cysteine 554, and cysteine 534–cysteine 539. N-linked (GlcNAc...) asparagine glycosylation is present at asparagine 173. Residue histidine 218 participates in Zn(2+) binding. Glutamate 219 is a catalytic residue. The Zn(2+) site is built by histidine 222 and histidine 228. Residues 316–357 form the EGF-like domain; that stretch reads NTAYCKEECKSEKTECEYGGYMRPSKCSECLCPDGLGGEKCE. A CUB domain is found at 367–481; it reads CGGILELSDE…IGFKIQVRST (115 aa). The 50-residue stretch at 506-555 folds into the TSP type-1 domain; it reads PNVWADWGEWSMCSRTCGGCGIRSRVRSCRSKKCEGRRQEFGTCNLKACP.

Zn(2+) serves as cofactor.

Its subcellular location is the secreted. Functionally, mtalloprotease. Involved in molting, a process during larval stages in which a new cuticle is formed and the old cuticle is shed. This is Zinc metalloproteinase nas-36 from Caenorhabditis briggsae.